We begin with the raw amino-acid sequence, 884 residues long: Probable inorganic carbon transporter subunit DabA (884 aa).

Cys-390, Asp-392, His-582, and Cys-597 together coordinate Zn(2+).

This sequence belongs to the inorganic carbon transporter (TC 9.A.2) DabA family. Forms a complex with DabB. Requires Zn(2+) as cofactor.

The protein localises to the cell membrane. Its function is as follows. Part of an energy-coupled inorganic carbon pump. The sequence is that of Probable inorganic carbon transporter subunit DabA from Staphylococcus saprophyticus subsp. saprophyticus (strain ATCC 15305 / DSM 20229 / NCIMB 8711 / NCTC 7292 / S-41).